The chain runs to 421 residues: MSKTHLTEQKFSDFALHPKVVEALEKKGFHNCTPIQALALPLTLAGRDVAGQAQTGTGKTMAFLTSTFHCLLSHPAIADRKVNQPRALIMAPTRELAVQIHADAEPLAEATGLKLGLAYGGDGYDKQLKVLESGVDILIGTTGRLIDYAKQNHINLGAIQVVVLDEADRMYDLGFIKDIRWLFRRMPPANQRLNMLFSATLSYRVRELAFEQMNNAEYIEVEPEQKTGHRIKEELFYPSNEEKMRLLQTLIEEEWPDRAIIFANTKHRCEEIWGHLAADGHRVGLLTGDVAQKKRLRILDEFTRGDLDILVATDVAARGLHIPAVTHVFNYDLPDDCEDYVHRIGRTGRAGANGHSISLACEEYALNLPAIETYIGHSIPVSKYNPDALMTDLPKPLRLTRPRTGNGPRRTGAPRNRRRSG.

The short motif at 9-37 (QKFSDFALHPKVVEALEKKGFHNCTPIQA) is the Q motif element. The region spanning 40 to 219 (LPLTLAGRDV…FEQMNNAEYI (180 aa)) is the Helicase ATP-binding domain. 53–60 (AQTGTGKT) contacts ATP. Residues 165–168 (DEAD) carry the DEAD box motif. In terms of domain architecture, Helicase C-terminal spans 245 to 390 (RLLQTLIEEE…VSKYNPDALM (146 aa)). The tract at residues 392 to 421 (DLPKPLRLTRPRTGNGPRRTGAPRNRRRSG) is disordered. The span at 402–414 (PRTGNGPRRTGAP) shows a compositional bias: low complexity.

It belongs to the DEAD box helicase family. RhlB subfamily. Component of the RNA degradosome, which is a multiprotein complex involved in RNA processing and mRNA degradation.

It is found in the cytoplasm. It catalyses the reaction ATP + H2O = ADP + phosphate + H(+). In terms of biological role, DEAD-box RNA helicase involved in RNA degradation. Has RNA-dependent ATPase activity and unwinds double-stranded RNA. This is ATP-dependent RNA helicase RhlB from Escherichia coli O157:H7.